Here is an 895-residue protein sequence, read N- to C-terminus: Transcription factor SWI6 (895 aa).

Polar residues predominate over residues Met1–Ser45. A disordered region spans residues Met1–Gln107. Over residues Met64 to Gln100 the composition is skewed to low complexity. Positions Ile112–Gln219 constitute an HTH APSES-type domain. Residues Ala143–Glu164 constitute a DNA-binding region (H-T-H motif). Disordered regions lie at residues Ala272–Arg293 and Asn323–Gly358. 2 ANK repeats span residues Gln458–Val488 and Ala607–Ile636. The tract at residues Ser653 to Asn684 is disordered. Residues Gly674–Asn684 show a composition bias toward polar residues. Positions Ser698–Arg759 form a coiled coil.

The protein localises to the nucleus. Transcription factor that plays a role downstream of the MCK1-MKK2-MPS1 cascade. Required for hyphal morphogenesis and pathogenicity. Is an important oxidative stress response regulator and plays a positive role in the regulation of extracellular peroxidases. This chain is Transcription factor SWI6, found in Pyricularia oryzae (strain 70-15 / ATCC MYA-4617 / FGSC 8958) (Rice blast fungus).